We begin with the raw amino-acid sequence, 88 residues long: Small ribosomal subunit protein uS17 (88 aa).

Belongs to the universal ribosomal protein uS17 family. As to quaternary structure, part of the 30S ribosomal subunit.

In terms of biological role, one of the primary rRNA binding proteins, it binds specifically to the 5'-end of 16S ribosomal RNA. The chain is Small ribosomal subunit protein uS17 from Syntrophotalea carbinolica (strain DSM 2380 / NBRC 103641 / GraBd1) (Pelobacter carbinolicus).